Consider the following 389-residue polypeptide: Aspartic protease 6 (389 aa).

The N-terminal stretch at Met1–Ala15 is a signal peptide. Positions Tyr71–Ala384 constitute a Peptidase A1 domain. N-linked (GlcNAc...) asparagine glycosylation occurs at Asn74. Asp89 is a catalytic residue. Residues Cys102 and Cys106 are joined by a disulfide bond. Residue Asp277 is part of the active site. A disulfide bridge links Cys312 with Cys344.

It belongs to the peptidase A1 family. Post-translationally, glycosylated. Has phosphorylcholine-substituted oligosaccharide N-glycans. As to expression, expressed in intestine, muscles, pharynx and hypodermis.

Its subcellular location is the secreted. In terms of biological role, aspartic protease. The chain is Aspartic protease 6 from Caenorhabditis elegans.